A 220-amino-acid polypeptide reads, in one-letter code: MMMMSNLPNDLVEEILSRVTVTFMRTVRSICKKWNALTKDRSFTNKYIRNIAALGEREFLMIKEFSIYLVGVNLHGIQNNNFDLSIELKGKLISMDNTIRRFCISQIFHCNGLFLCVSQKDMDNRLVVWNPYCSKPRWIKPSYNYRTVDRFALGYDKSCGSHKILRLFGDNLNNLEIYDLSSNSWRVPNVTLERDIVYMQPGVSLKEKTYWYARDKESEN.

The F-box domain maps to 1–51 (MMMMSNLPNDLVEEILSRVTVTFMRTVRSICKKWNALTKDRSFTNKYIRNI).

The chain is Putative F-box protein At3g20705 from Arabidopsis thaliana (Mouse-ear cress).